The following is a 64-amino-acid chain: DNA gyrase inhibitor YacG (64 aa).

Positions 9, 12, 28, and 32 each coordinate Zn(2+). The tract at residues 45–64 (KRIPSSGDLSESDDWSEEPK) is disordered. Acidic residues predominate over residues 54–64 (SESDDWSEEPK).

The protein belongs to the DNA gyrase inhibitor YacG family. In terms of assembly, interacts with GyrB. Zn(2+) serves as cofactor.

Functionally, inhibits all the catalytic activities of DNA gyrase by preventing its interaction with DNA. Acts by binding directly to the C-terminal domain of GyrB, which probably disrupts DNA binding by the gyrase. This chain is DNA gyrase inhibitor YacG, found in Escherichia fergusonii (strain ATCC 35469 / DSM 13698 / CCUG 18766 / IAM 14443 / JCM 21226 / LMG 7866 / NBRC 102419 / NCTC 12128 / CDC 0568-73).